The sequence spans 722 residues: Putative tyrosine-protein kinase in cps region (722 aa).

2 helical membrane-spanning segments follow: residues Ile-31 to Ile-53 and Ile-427 to Leu-449.

The protein belongs to the etk/wzc family. Autophosphorylated on tyrosine residue(s).

Its subcellular location is the cell inner membrane. The catalysed reaction is L-tyrosyl-[protein] + ATP = O-phospho-L-tyrosyl-[protein] + ADP + H(+). It functions in the pathway glycan metabolism; exopolysaccharide biosynthesis. In Klebsiella pneumoniae, this protein is Putative tyrosine-protein kinase in cps region.